Consider the following 742-residue polypeptide: Collectin-12 (742 aa).

Residues 1–37 (MKDDFAEEEEVQSFGYKRFGIQEGTQCTKCKNNWALK) are Cytoplasmic-facing. The helical; Signal-anchor for type II membrane protein transmembrane segment at 38–58 (FSIVLLYILCALLTITVAILG) threads the bilayer. The Extracellular segment spans residues 59 to 742 (YKVVEKMDNV…EREAVPSSIL (684 aa)). Residue Asn-67 is glycosylated (N-linked (GlcNAc...) asparagine). Residues 73 to 142 (ETSHQTYDNK…KDTLEKLQAN (70 aa)) are a coiled coil. Asn-159 and Asn-168 each carry an N-linked (GlcNAc...) asparagine glycan. A coiled-coil region spans residues 205–254 (NLNNLNLTQVQQRNLISNLQQSVDDTSLAIQRIKNDFQNLQQVFLQAKKD). N-linked (GlcNAc...) asparagine glycosylation is present at Asn-271. Residues 439–608 (TILQGPPGPR…TPASEVNGCP (170 aa)) are disordered. Collagen-like domains follow at residues 452-511 (GDRG…KGSR) and 527-586 (GPPG…PGPS). The segment covering 501 to 514 (SKGSQGPKGSRGSP) has biased composition (low complexity). A compositionally biased stretch (pro residues) spans 516–532 (KPGPQGPSGDPGPPGPP). The span at 534–556 (KDGLPGPQGPPGFQGLQGTVGEP) shows a compositional bias: low complexity. Positions 571-585 (PGMPGPKGPPGPPGP) are enriched in pro residues. 3 disulfides stabilise this stretch: Cys-607-Cys-618, Cys-635-Cys-730, and Cys-708-Cys-722. A C-type lectin domain is found at 614-731 (FTDKCYYFSL…CDEINNFICE (118 aa)). 5 residues coordinate Ca(2+): Phe-644, Asn-646, Glu-650, Asp-670, and Glu-674. 3 residues coordinate a carbohydrate: Lys-691, Gln-694, and Asp-696. 8 residues coordinate Ca(2+): Gln-694, Asp-696, Asn-697, Glu-706, Asp-707, Asn-718, Asp-719, and Glu-731. Position 706 (Glu-706) interacts with a carbohydrate. 2 residues coordinate a carbohydrate: Asn-718 and Asp-719.

In terms of assembly, the extracellular domain forms a stable trimer. The extracellular domain interacts with fibrillar amyloid-beta peptide. Expressed in vascular endothelial cells in the heart, in perivascular macrophage and smooth muscle cells. Expressed in plaques-surrounding reactive astrocytes located in cerebral cortex and hippocampus and in leptomeningeal vessels showing characteristics of cerebral amyloid angiopathy (CAA) in a double transgenic mouse model of Alzheimer disease (at protein level). Strongly expressed in lung. Moderately expressed in heart, skeletal muscle, spleen, liver, brain, colon, testis, stomach and kidney. Expressed in neonatal astrocytes. Expressed in reactive astrocytes and vascular/perivascular cells in the brain of a double transgenic mouse model of Alzheimer disease.

Its subcellular location is the membrane. In terms of biological role, scavenger receptor that displays several functions associated with host defense. Promotes binding and phagocytosis of Gram-positive, Gram-negative bacteria and yeast. Also binds to sialyl Lewis X or a trisaccharide and asialo-orosomucoid (ASOR). Mediates the recognition, internalization and degradation of oxidatively modified low density lipoprotein (oxLDL) by vascular endothelial cells. Binds to several carbohydrates including Gal-type ligands, D-galactose, L- and D-fucose, GalNAc, T and Tn antigens in a calcium-dependent manner and internalizes specifically GalNAc in nurse-like cells. The polypeptide is Collectin-12 (Colec12) (Mus musculus (Mouse)).